The chain runs to 325 residues: Formimidoylglutamase (325 aa).

Mn(2+) is bound by residues H130, D156, H158, D160, C244, and D246.

This sequence belongs to the arginase family. The cofactor is Mn(2+).

It catalyses the reaction N-formimidoyl-L-glutamate + H2O = formamide + L-glutamate. It functions in the pathway amino-acid degradation; L-histidine degradation into L-glutamate; L-glutamate from N-formimidoyl-L-glutamate (hydrolase route): step 1/1. Functionally, catalyzes the conversion of N-formimidoyl-L-glutamate to L-glutamate and formamide. This Geobacillus sp. (strain WCH70) protein is Formimidoylglutamase.